Here is a 101-residue protein sequence, read N- to C-terminus: Translation initiation factor IF-1, chloroplastic (101 aa).

Residues 1-10 show a composition bias toward polar residues; sequence MNQLKKSFSP. Positions 1–35 are disordered; sequence MNQLKKSFSPTEGKKDQNNLINDPQKNKQKKQKKL. Positions 26–101 constitute an S1-like domain; it reads KNKQKKQKKL…TKGRITYRHR (76 aa).

It belongs to the IF-1 family. Component of the 30S ribosomal translation pre-initiation complex which assembles on the 30S ribosome in the order IF-2 and IF-3, IF-1 and N-formylmethionyl-tRNA(fMet); mRNA recruitment can occur at any time during PIC assembly.

The protein resides in the plastid. The protein localises to the chloroplast. Functionally, one of the essential components for the initiation of protein synthesis. Stabilizes the binding of IF-2 and IF-3 on the 30S subunit to which N-formylmethionyl-tRNA(fMet) subsequently binds. Helps modulate mRNA selection, yielding the 30S pre-initiation complex (PIC). Upon addition of the 50S ribosomal subunit IF-1, IF-2 and IF-3 are released leaving the mature 70S translation initiation complex. The chain is Translation initiation factor IF-1, chloroplastic from Tetradesmus obliquus (Green alga).